We begin with the raw amino-acid sequence, 309 residues long: MTAKTIRHYLQFKDFSLEDYEYVLERTGILKRKFKNYETYHPLHDRTLAMIFEKSSTRTRLSFEAGIFQLGGHAVFMSTRDTQLGRGEPVEDSAQVISRMVDIIMIRTFEQDIIQRFAENSRVPVINGLTNEYHPCQVLADIFTYYEHRGPIRGKTVAWVGDANNMLYTWIQAARILGFKLRLSTPPGYALDTKLVDAESAPFYQVFDDPNEACKGADLVTTDVWTSMGFEAENEARKQAFADWCVDEEMMSHAHPDALFMHCLPAHRGEEVTAGVIDGPQSVVWDEAENRLHVQKALMEFLLLGRLNH.

Carbamoyl phosphate-binding positions include 56–59 (STRT), glutamine 83, arginine 107, and 134–137 (HPCQ). L-ornithine contacts are provided by residues asparagine 165, aspartate 223, and 227-228 (SM). Carbamoyl phosphate contacts are provided by residues 263 to 264 (CL) and arginine 291.

Belongs to the aspartate/ornithine carbamoyltransferase superfamily. OTCase family.

The protein localises to the cytoplasm. It catalyses the reaction carbamoyl phosphate + L-ornithine = L-citrulline + phosphate + H(+). Its pathway is amino-acid biosynthesis; L-arginine biosynthesis; L-arginine from L-ornithine and carbamoyl phosphate: step 1/3. Functionally, reversibly catalyzes the transfer of the carbamoyl group from carbamoyl phosphate (CP) to the N(epsilon) atom of ornithine (ORN) to produce L-citrulline. In Burkholderia mallei (strain ATCC 23344), this protein is Ornithine carbamoyltransferase.